The sequence spans 217 residues: Growth hormone variant (217 aa).

The N-terminal stretch at 1-26 (MAAGSWTCLILAIALLCLPWLQEGSA) is a signal peptide. Cystine bridges form between cysteine 79-cysteine 191 and cysteine 208-cysteine 215. A phosphoserine mark is found at serine 132 and serine 176.

This sequence belongs to the somatotropin/prolactin family. In terms of tissue distribution, expressed in the placenta.

It is found in the secreted. Its function is as follows. Plays an important role in growth control. Its major role in stimulating body growth is to stimulate the liver and other tissues to secrete IGF1. It stimulates both the differentiation and proliferation of myoblasts. It also stimulates amino acid uptake and protein synthesis in muscle and other tissues. In Macaca mulatta (Rhesus macaque), this protein is Growth hormone variant (GH2).